The following is a 193-amino-acid chain: Bifunctional protein PyrR (193 aa).

Residues threonine 57–arginine 58, arginine 98, aspartate 119–serine 127, arginine 152, and valine 176 each bind substrate. Residues valine 115–serine 127 carry the PRPP-binding motif.

It belongs to the purine/pyrimidine phosphoribosyltransferase family. PyrR subfamily.

It catalyses the reaction UMP + diphosphate = 5-phospho-alpha-D-ribose 1-diphosphate + uracil. In terms of biological role, regulates the transcription of the pyrimidine nucleotide (pyr) operon in response to exogenous pyrimidines. Functionally, also displays a weak uracil phosphoribosyltransferase activity which is not physiologically significant. The chain is Bifunctional protein PyrR from Mycobacterium bovis (strain ATCC BAA-935 / AF2122/97).